A 491-amino-acid chain; its full sequence is Glutamate--tRNA ligase (491 aa).

The 'HIGH' region signature appears at 9–19 (PSPTGTPHVGM). The 'KMSKS' region signature appears at 253 to 257 (KLSKR). Residue K256 coordinates ATP.

This sequence belongs to the class-I aminoacyl-tRNA synthetase family. Glutamate--tRNA ligase type 1 subfamily. In terms of assembly, monomer.

It is found in the cytoplasm. The enzyme catalyses tRNA(Glu) + L-glutamate + ATP = L-glutamyl-tRNA(Glu) + AMP + diphosphate. In terms of biological role, catalyzes the attachment of glutamate to tRNA(Glu) in a two-step reaction: glutamate is first activated by ATP to form Glu-AMP and then transferred to the acceptor end of tRNA(Glu). The sequence is that of Glutamate--tRNA ligase from Leifsonia xyli subsp. xyli (strain CTCB07).